The chain runs to 376 residues: Chorismate synthase (376 aa).

NADP(+) is bound by residues Arg39 and Arg45. FMN is bound by residues 115 to 117 (RSS), Gly276, 291 to 295 (KPIPT), and Arg317.

It belongs to the chorismate synthase family. As to quaternary structure, homotetramer. The cofactor is FMNH2.

The enzyme catalyses 5-O-(1-carboxyvinyl)-3-phosphoshikimate = chorismate + phosphate. Its pathway is metabolic intermediate biosynthesis; chorismate biosynthesis; chorismate from D-erythrose 4-phosphate and phosphoenolpyruvate: step 7/7. In terms of biological role, catalyzes the anti-1,4-elimination of the C-3 phosphate and the C-6 proR hydrogen from 5-enolpyruvylshikimate-3-phosphate (EPSP) to yield chorismate, which is the branch point compound that serves as the starting substrate for the three terminal pathways of aromatic amino acid biosynthesis. This reaction introduces a second double bond into the aromatic ring system. The chain is Chorismate synthase from Thermotoga sp. (strain RQ2).